The chain runs to 155 residues: MSEENQQPERQFAIQKLYVKDVSFETPNSPAVFTLKWEPKVEFNLGSKVQQLQEGLFEVSLSVTITVKLEEKTAYLVEICQAGIFTISGFPEQEMGPLLGSYCPNILFPYAREAVSDLVNKGGFPPMLLAPINFDALYMQQVQMAQQQAQPATPH.

It belongs to the SecB family. Homotetramer, a dimer of dimers. One homotetramer interacts with 1 SecA dimer.

It is found in the cytoplasm. One of the proteins required for the normal export of preproteins out of the cell cytoplasm. It is a molecular chaperone that binds to a subset of precursor proteins, maintaining them in a translocation-competent state. It also specifically binds to its receptor SecA. This Methylococcus capsulatus (strain ATCC 33009 / NCIMB 11132 / Bath) protein is Protein-export protein SecB.